The following is a 457-amino-acid chain: Aromatic amino acid transport protein AroP (457 aa).

At M1 to H19 the chain is on the cytoplasmic side. The chain crosses the membrane as a helical span at residues I20–V40. Topologically, residues I41–Q42 are periplasmic. The chain crosses the membrane as a helical span at residues S43–M63. The Cytoplasmic segment spans residues R64 to Y86. A helical membrane pass occupies residues W87 to A107. The Periplasmic portion of the chain corresponds to M108–Y117. A helical transmembrane segment spans residues I118 to I138. Residues N139–W155 are Cytoplasmic-facing. The chain crosses the membrane as a helical span at residues F156 to F176. Over S177–T201 the chain is Periplasmic. The helical transmembrane segment at G202–I222 threads the bilayer. Topologically, residues T223–Q240 are cytoplasmic. The chain crosses the membrane as a helical span at residues V241–P261. The Periplasmic segment spans residues W262 to P271. A helical transmembrane segment spans residues F272–V292. Residues L293 to P333 lie on the Cytoplasmic side of the membrane. A helical transmembrane segment spans residues V334–A354. Residues P355–A358 lie on the Periplasmic side of the membrane. A helical membrane pass occupies residues F359–L379. Over A380–A399 the chain is Cytoplasmic. Residues L400–M420 form a helical membrane-spanning segment. Over L421–G425 the chain is Periplasmic. Residues M426 to F446 traverse the membrane as a helical segment. The Cytoplasmic portion of the chain corresponds to K447–H457.

Belongs to the amino acid-polyamine-organocation (APC) superfamily. Amino acid transporter (AAT) (TC 2.A.3.1) family.

Its subcellular location is the cell inner membrane. It carries out the reaction L-phenylalanine(in) + H(+)(in) = L-phenylalanine(out) + H(+)(out). The catalysed reaction is L-tryptophan(in) + H(+)(in) = L-tryptophan(out) + H(+)(out). It catalyses the reaction L-tyrosine(in) + H(+)(in) = L-tyrosine(out) + H(+)(out). Permease that is involved in the active transport across the cytoplasmic membrane of all three aromatic amino acids, phenylalanine, tyrosine and tryptophan. This Shigella flexneri protein is Aromatic amino acid transport protein AroP (aroP).